The sequence spans 142 residues: Large ribosomal subunit protein uL11 (142 aa).

This sequence belongs to the universal ribosomal protein uL11 family. As to quaternary structure, part of the ribosomal stalk of the 50S ribosomal subunit. Interacts with L10 and the large rRNA to form the base of the stalk. L10 forms an elongated spine to which L12 dimers bind in a sequential fashion forming a multimeric L10(L12)X complex. Post-translationally, one or more lysine residues are methylated.

Forms part of the ribosomal stalk which helps the ribosome interact with GTP-bound translation factors. The protein is Large ribosomal subunit protein uL11 of Thermobifida fusca (strain YX).